The primary structure comprises 265 residues: Small ribosomal subunit protein uS5 (265 aa).

A compositionally biased stretch (low complexity) spans 1 to 15 (MADTQPAQEAPAADA). The interval 1–44 (MADTQPAQEAPAADAPRAERNFGRGRGGRGGRGRGRGGPGEEKE) is disordered. A compositionally biased stretch (basic residues) spans 26–35 (RGGRGGRGRG). The S5 DRBM domain occupies 88–151 (LHDEMMKIYP…IAAKLNIVPV (64 aa)). Residues 245-265 (TEPSRDPTDEHGELLAEMTTA) are disordered. Basic and acidic residues predominate over residues 246 to 258 (EPSRDPTDEHGEL).

This sequence belongs to the universal ribosomal protein uS5 family.

Component of the ribosome, a large ribonucleoprotein complex responsible for the synthesis of proteins in the cell. The small ribosomal subunit (SSU) binds messenger RNAs (mRNAs) and translates the encoded message by selecting cognate aminoacyl-transfer RNA (tRNA) molecules. The large subunit (LSU) contains the ribosomal catalytic site termed the peptidyl transferase center (PTC), which catalyzes the formation of peptide bonds, thereby polymerizing the amino acids delivered by tRNAs into a polypeptide chain. The nascent polypeptides leave the ribosome through a tunnel in the LSU and interact with protein factors that function in enzymatic processing, targeting, and the membrane insertion of nascent chains at the exit of the ribosomal tunnel. Plays a role in the assembly and function of the 40S ribosomal subunit. Mutations in this protein affects the control of translational fidelity. Involved in nucleolar processing of pre-18S ribosomal RNA and ribosome assembly. This Leishmania amazonensis protein is Small ribosomal subunit protein uS5.